We begin with the raw amino-acid sequence, 436 residues long: MVKCSLIRALMVVAGLVGAAAFTTPANALVELNINKGNIQPLPIAVTDFLQGDMGAQVSQVIAADLQRSGLFAPINKTAFIEKISNPDAAPRFEDWKVINAQALVTGRVTQEADGRLRAEFRLWDTFAGQQMTGQQFYTQPENWRRVAHIIADAIYKQITGEEGYFDTRVVFVSESGTKQQRKRQLAIMDQDGFNVRTLTDGSDLVLTPRFSPSRQEVTYMSFANQQPRVYLLQLETGQREVVGNFPGMTFSPRFSPDGQKVIMSLQQEGNSNIYTMDLRSRTTTRLTSTAAIDTSPSYSPDGARVSFESDRGGKPQIYVMNADGSGQTRISFGDGSYSTPVWSPRGDLIAFTKQSGGKFSIGVMKPDGSGERILTSGFHNEGPTWAPNGRVLMFFRQAAGAGGPQLYSIDLTGYNEQLVKTPSYASDPAWSPLLE.

Residues 1–19 (MVKCSLIRALMVVAGLVGA) form the signal peptide.

Belongs to the TolB family. The Tol-Pal system is composed of five core proteins: the inner membrane proteins TolA, TolQ and TolR, the periplasmic protein TolB and the outer membrane protein Pal. They form a network linking the inner and outer membranes and the peptidoglycan layer.

It localises to the periplasm. Part of the Tol-Pal system, which plays a role in outer membrane invagination during cell division and is important for maintaining outer membrane integrity. The polypeptide is Tol-Pal system protein TolB (Rhizobium etli (strain ATCC 51251 / DSM 11541 / JCM 21823 / NBRC 15573 / CFN 42)).